Consider the following 157-residue polypeptide: Ubiquitin-like protein 4A (157 aa).

The 76-residue stretch at 1-76 (MQLTVKALQG…LNLVVKPLEK (76 aa)) folds into the Ubiquitin-like domain. Lys-48 is covalently cross-linked (Glycyl lysine isopeptide (Lys-Gly) (interchain with G-Cter in ubiquitin)). At Ser-90 the chain carries Phosphoserine. The segment at 96–138 (WQLISKVLARHFSIGDASRVLEQLQRDYDRSLSRLTLDDIERL) is required and sufficient for interaction with BAG6.

In terms of assembly, component of the BAG6/BAT3 complex, at least composed of BAG6, UBL4A and GET4/TRC35. Interacts with BAG6; the interaction is direct and required for UBL4A protein stability. Interacts with USP13; may be indirect via BAG6. Post-translationally, polyubiquitinated. Ubiquitination by AMFR and deubiquitination by USP13 may regulate the interaction between the BAG6/BAT complex and SGTA and therefore may regulate client proteins fate.

The protein resides in the cytoplasm. It localises to the cytosol. It is found in the nucleus. In terms of biological role, as part of a cytosolic protein quality control complex, the BAG6/BAT3 complex, maintains misfolded and hydrophobic patches-containing proteins in a soluble state and participates in their proper delivery to the endoplasmic reticulum or alternatively can promote their sorting to the proteasome where they undergo degradation. The BAG6/BAT3 complex is involved in the post-translational delivery of tail-anchored/type II transmembrane proteins to the endoplasmic reticulum membrane. Recruited to ribosomes, it interacts with the transmembrane region of newly synthesized tail-anchored proteins and together with SGTA and ASNA1 mediates their delivery to the endoplasmic reticulum. Client proteins that cannot be properly delivered to the endoplasmic reticulum are ubiquitinated and sorted to the proteasome. Similarly, the BAG6/BAT3 complex also functions as a sorting platform for proteins of the secretory pathway that are mislocalized to the cytosol either delivering them to the proteasome for degradation or to the endoplasmic reticulum. The BAG6/BAT3 complex also plays a role in the endoplasmic reticulum-associated degradation (ERAD), a quality control mechanism that eliminates unwanted proteins of the endoplasmic reticulum through their retrotranslocation to the cytosol and their targeting to the proteasome. It maintains these retrotranslocated proteins in an unfolded yet soluble state condition in the cytosol to ensure their proper delivery to the proteasome. This Rattus norvegicus (Rat) protein is Ubiquitin-like protein 4A (Ubl4a).